Here is a 537-residue protein sequence, read N- to C-terminus: Glucans biosynthesis protein D (537 aa).

Positions 1–30 (MLMYRRDFLKSVTAAWVAFGLPNPLGGAFA) form a signal peptide, tat-type signal.

It belongs to the OpgD/OpgG family. In terms of processing, predicted to be exported by the Tat system. The position of the signal peptide cleavage has not been experimentally proven.

The protein resides in the periplasm. It participates in glycan metabolism; osmoregulated periplasmic glucan (OPG) biosynthesis. Functionally, probably involved in the control of the structural glucose backbone of osmoregulated periplasmic glucans (OPGs). This Xylella fastidiosa (strain M12) protein is Glucans biosynthesis protein D.